The sequence spans 254 residues: Ribose-5-phosphate isomerase A (254 aa).

Residues 45–48, 105–108, and 118–121 contribute to the substrate site; these read TGST, DGAD, and KGGG. The active-site Proton acceptor is Glu127. Lys145 provides a ligand contact to substrate.

The protein belongs to the ribose 5-phosphate isomerase family. Homodimer.

The catalysed reaction is aldehydo-D-ribose 5-phosphate = D-ribulose 5-phosphate. Its pathway is carbohydrate degradation; pentose phosphate pathway; D-ribose 5-phosphate from D-ribulose 5-phosphate (non-oxidative stage): step 1/1. In terms of biological role, catalyzes the reversible conversion of ribose-5-phosphate to ribulose 5-phosphate. The polypeptide is Ribose-5-phosphate isomerase A (Treponema pallidum subsp. pallidum (strain SS14)).